A 382-amino-acid polypeptide reads, in one-letter code: MKYELDKTSGNARRGRLVFERPQGTFSVETPAFMPVGTYGTVKGMTPEEVRATGAEILLGNTFHLWLRPGQEIMRKHGDLHDFMQWHRPILTDSGGFQVFSLGKLRKITEEGVKFQNPINGERIFLSPEKSMEIQYDLGSDIVMIFDECTPYPATFDYAKKSMEMSLRWAKRSHDRFDELGNKNALFGIIQGGVFEELRKVSLEGLVNIGFDGYAVGGLAVGEPKEDMHRILEYICPQIPADKPRYLMGVGKPEDLVEGVRRGIDMFDCVMPTRNARNGHLFVTDGIVKIRNAKYRDDTSPLDPECDCYTCKNYTKAYLYHLDKCGEILGARLNTIHNLRYYQRLMAEIRQAIEDDRFDDFVVEFYARMGKPVPPLQLADNS.

The Proton acceptor role is filled by D93. Substrate contacts are provided by residues 93–97 (DSGGF), D147, Q191, and G218. Residues 249–255 (GVGKPED) form an RNA binding region. D268 serves as the catalytic Nucleophile. The segment at 273–277 (TRNAR) is RNA binding; important for wobble base 34 recognition. Positions 306, 308, 311, and 337 each coordinate Zn(2+).

Belongs to the queuine tRNA-ribosyltransferase family. As to quaternary structure, homodimer. Within each dimer, one monomer is responsible for RNA recognition and catalysis, while the other monomer binds to the replacement base PreQ1. Zn(2+) serves as cofactor.

The catalysed reaction is 7-aminomethyl-7-carbaguanine + guanosine(34) in tRNA = 7-aminomethyl-7-carbaguanosine(34) in tRNA + guanine. Its pathway is tRNA modification; tRNA-queuosine biosynthesis. Functionally, catalyzes the base-exchange of a guanine (G) residue with the queuine precursor 7-aminomethyl-7-deazaguanine (PreQ1) at position 34 (anticodon wobble position) in tRNAs with GU(N) anticodons (tRNA-Asp, -Asn, -His and -Tyr). Catalysis occurs through a double-displacement mechanism. The nucleophile active site attacks the C1' of nucleotide 34 to detach the guanine base from the RNA, forming a covalent enzyme-RNA intermediate. The proton acceptor active site deprotonates the incoming PreQ1, allowing a nucleophilic attack on the C1' of the ribose to form the product. After dissociation, two additional enzymatic reactions on the tRNA convert PreQ1 to queuine (Q), resulting in the hypermodified nucleoside queuosine (7-(((4,5-cis-dihydroxy-2-cyclopenten-1-yl)amino)methyl)-7-deazaguanosine). The polypeptide is Queuine tRNA-ribosyltransferase (Haemophilus influenzae (strain 86-028NP)).